The chain runs to 1175 residues: Chromosome partition protein Smc (1175 aa).

32 to 39 (PNGCGKSN) is an ATP binding site. Residues 170-504 (VSKYKERRRE…ALKALQEKVK (335 aa)) are a coiled coil. One can recognise an SMC hinge domain in the interval 524 to 625 (LWSRIAIEPG…YTAPTLEEAL (102 aa)). Coiled coils occupy residues 684–918 (DESR…FQLK) and 944–1022 (SQSI…ELLS). The interval 807-849 (RQAQEATFSRRSLEARRGELSRTIETASQQARSLADEQQRAQD) is disordered. Residues 817-828 (RSLEARRGELSR) show a composition bias toward basic and acidic residues. Over residues 829 to 838 (TIETASQQAR) the composition is skewed to polar residues. The span at 840–849 (LADEQQRAQD) shows a compositional bias: basic and acidic residues.

It belongs to the SMC family. As to quaternary structure, homodimer.

Its subcellular location is the cytoplasm. Functionally, required for chromosome condensation and partitioning. The chain is Chromosome partition protein Smc from Delftia acidovorans (strain DSM 14801 / SPH-1).